A 304-amino-acid chain; its full sequence is UDP-N-acetylenolpyruvoylglucosamine reductase (304 aa).

The region spanning 33–213 (IGGPADIMVI…LEITRDLTER (181 aa)) is the FAD-binding PCMH-type domain. R177 is a catalytic residue. The active-site Proton donor is S227. Residue E297 is part of the active site.

The protein belongs to the MurB family. It depends on FAD as a cofactor.

It is found in the cytoplasm. The catalysed reaction is UDP-N-acetyl-alpha-D-muramate + NADP(+) = UDP-N-acetyl-3-O-(1-carboxyvinyl)-alpha-D-glucosamine + NADPH + H(+). Its pathway is cell wall biogenesis; peptidoglycan biosynthesis. In terms of biological role, cell wall formation. The protein is UDP-N-acetylenolpyruvoylglucosamine reductase of Alkaliphilus oremlandii (strain OhILAs) (Clostridium oremlandii (strain OhILAs)).